The sequence spans 362 residues: Cobalt-precorrin-5B C(1)-methyltransferase (362 aa).

It belongs to the CbiD family.

It catalyses the reaction Co-precorrin-5B + S-adenosyl-L-methionine = Co-precorrin-6A + S-adenosyl-L-homocysteine. Its pathway is cofactor biosynthesis; adenosylcobalamin biosynthesis; cob(II)yrinate a,c-diamide from sirohydrochlorin (anaerobic route): step 6/10. In terms of biological role, catalyzes the methylation of C-1 in cobalt-precorrin-5B to form cobalt-precorrin-6A. This is Cobalt-precorrin-5B C(1)-methyltransferase from Burkholderia lata (strain ATCC 17760 / DSM 23089 / LMG 22485 / NCIMB 9086 / R18194 / 383).